Reading from the N-terminus, the 285-residue chain is Bifunctional protein FolD (285 aa).

Residues 166–168 (GAS) and Ile232 each bind NADP(+).

Belongs to the tetrahydrofolate dehydrogenase/cyclohydrolase family. As to quaternary structure, homodimer.

It carries out the reaction (6R)-5,10-methylene-5,6,7,8-tetrahydrofolate + NADP(+) = (6R)-5,10-methenyltetrahydrofolate + NADPH. It catalyses the reaction (6R)-5,10-methenyltetrahydrofolate + H2O = (6R)-10-formyltetrahydrofolate + H(+). It participates in one-carbon metabolism; tetrahydrofolate interconversion. In terms of biological role, catalyzes the oxidation of 5,10-methylenetetrahydrofolate to 5,10-methenyltetrahydrofolate and then the hydrolysis of 5,10-methenyltetrahydrofolate to 10-formyltetrahydrofolate. The polypeptide is Bifunctional protein FolD (Aliivibrio salmonicida (strain LFI1238) (Vibrio salmonicida (strain LFI1238))).